The primary structure comprises 146 residues: Hemoglobin subunit beta (146 aa).

Val-1 is modified (N-acetylvaline). The Globin domain occupies 2 to 146; it reads HLSGEEKACV…VANALAHKYH (145 aa). Residue Thr-12 is modified to Phosphothreonine. Ser-44 is modified (phosphoserine). At Lys-59 the chain carries N6-acetyllysine. Residue His-63 coordinates heme b. Residue Lys-82 is modified to N6-acetyllysine. His-92 serves as a coordination point for heme b. An S-nitrosocysteine modification is found at Cys-93. Lys-144 is subject to N6-acetyllysine.

This sequence belongs to the globin family. As to quaternary structure, heterotetramer of two alpha chains and two beta chains. In terms of tissue distribution, red blood cells.

Functionally, involved in oxygen transport from the lung to the various peripheral tissues. In Suncus murinus (Asian house shrew), this protein is Hemoglobin subunit beta (HBB).